The sequence spans 1081 residues: Psi-producing oxygenase A (1081 aa).

The tract at residues T105–V446 is linoleate 8R-lipoxygenase. H202 serves as a coordination point for heme b. Y374 is an active-site residue. H377 contacts heme b. A 9,12-octadecadienoate 8-hydroperoxide 8R-isomerase region spans residues I654–F1081.

It belongs to the peroxidase family. Homotetramer. Heme b serves as cofactor.

The enzyme catalyses (9Z,12Z)-octadecadienoate + O2 = (8R,9Z,12Z)-8-hydroperoxyoctadeca-9,12-dienoate. It carries out the reaction (8R,9Z,12Z)-8-hydroperoxyoctadeca-9,12-dienoate = (5S,8R,9Z,12Z)-5,8-dihydroxyoctadeca-9,12-dienoate. Its function is as follows. Bifunctional heme-containing enzyme that oxidizes linoleic acid to (8R,9Z,12Z)-8-hydroperoxyoctadeca-9,12-dienoate (within the N-terminal heme peroxidase domain), which is subsequently isomerized to (5S,8R,9Z,12Z)-5,8-dihydroxyoctadeca-9,12-dienoate (within the C-terminal P450 heme thiolate domain). Oxidized unsaturated fatty acids, so-called oxylipins, derived from endogenous fatty acids, influence the development of the asexual conidiophores and sexual cleistothecia and regulate the secondary metabolism. These substances were collectively named psi factors and are primarily a mixture of hydroxylated oleic, linoleic and alpha-linolenic acids. They are termed psi-beta, psi-alpha, and psi-gamma, respectively. The chain is Psi-producing oxygenase A (ppoA) from Emericella nidulans (Aspergillus nidulans).